Reading from the N-terminus, the 434-residue chain is Enolase A (434 aa).

Substrate is bound by residues His160 and Glu169. The active-site Proton donor is Glu212. Asp247, Glu296, and Asp321 together coordinate Mg(2+). Residues Glu296 and Asp321 each contribute to the substrate site. Lys346 acts as the Proton acceptor in catalysis. Substrate-binding positions include 373 to 376 (SHRS) and Lys397.

This sequence belongs to the enolase family. In terms of assembly, homodimer. It depends on Mg(2+) as a cofactor.

It is found in the cytoplasm. It catalyses the reaction (2R)-2-phosphoglycerate = phosphoenolpyruvate + H2O. It functions in the pathway carbohydrate degradation; glycolysis; pyruvate from D-glyceraldehyde 3-phosphate: step 4/5. The sequence is that of Enolase A (enoA) from Dictyostelium discoideum (Social amoeba).